A 414-amino-acid polypeptide reads, in one-letter code: Putative transporter AmpG 4 (414 aa).

The next 12 helical transmembrane spans lie at 15 to 35 (IFILGIVSGMPLVIIFSTLSV), 44 to 63 (IAVITTFAVARLSYSLKVFW), 84 to 104 (WLILCSSLMVLVLIAMSKENP), 109 to 129 (TSLYFLTIALGFLSSTFDIAV), 150 to 170 (VFGYRIGMLITGAGALYLAEI), 177 to 197 (LTFVIIAIIFAVATIFIITVN), 230 to 250 (FAVTILLAVIFFKLGDAMLGA), 268 to 288 (IIAKLYGLIATLVGGFAGGIV), 295 to 315 (FKGLIITGIAQSLTHFAFIWL), 324 to 344 (ALLIAITIENFAAAMGATALV), 360 to 379 (YALLSSSSSLCNNTVTIYAG), and 389 to 409 (GFFIFTIILALPALFILMYLN).

The protein belongs to the major facilitator superfamily.

It is found in the cell inner membrane. The chain is Putative transporter AmpG 4 (ampG4) from Rickettsia felis (strain ATCC VR-1525 / URRWXCal2) (Rickettsia azadi).